We begin with the raw amino-acid sequence, 160 residues long: 6,7-dimethyl-8-ribityllumazine synthase (160 aa).

5-amino-6-(D-ribitylamino)uracil contacts are provided by residues Trp-31, 65–67, and 89–91; these read SFE and CVV. 94-95 is a binding site for (2S)-2-hydroxy-3-oxobutyl phosphate; that stretch reads DT. The Proton donor role is filled by His-97. Phe-122 provides a ligand contact to 5-amino-6-(D-ribitylamino)uracil. Residue Arg-136 coordinates (2S)-2-hydroxy-3-oxobutyl phosphate.

Belongs to the DMRL synthase family.

It catalyses the reaction (2S)-2-hydroxy-3-oxobutyl phosphate + 5-amino-6-(D-ribitylamino)uracil = 6,7-dimethyl-8-(1-D-ribityl)lumazine + phosphate + 2 H2O + H(+). The protein operates within cofactor biosynthesis; riboflavin biosynthesis; riboflavin from 2-hydroxy-3-oxobutyl phosphate and 5-amino-6-(D-ribitylamino)uracil: step 1/2. Functionally, catalyzes the formation of 6,7-dimethyl-8-ribityllumazine by condensation of 5-amino-6-(D-ribitylamino)uracil with 3,4-dihydroxy-2-butanone 4-phosphate. This is the penultimate step in the biosynthesis of riboflavin. The polypeptide is 6,7-dimethyl-8-ribityllumazine synthase (Parabacteroides distasonis (strain ATCC 8503 / DSM 20701 / CIP 104284 / JCM 5825 / NCTC 11152)).